We begin with the raw amino-acid sequence, 410 residues long: Probable nicotinate phosphoribosyltransferase (410 aa).

Positions 15, 170, and 220 each coordinate nicotinate. Phosphohistidine is present on His223. Thr348 lines the 5-phospho-alpha-D-ribose 1-diphosphate pocket.

It belongs to the NAPRTase family. Mg(2+) is required as a cofactor. Mn(2+) serves as cofactor. In terms of processing, transiently phosphorylated on a His residue during the reaction cycle. Phosphorylation strongly increases the affinity for substrates and increases the rate of nicotinate D-ribonucleotide production. Dephosphorylation regenerates the low-affinity form of the enzyme, leading to product release.

The catalysed reaction is nicotinate + 5-phospho-alpha-D-ribose 1-diphosphate + ATP + H2O = nicotinate beta-D-ribonucleotide + ADP + phosphate + diphosphate. It functions in the pathway cofactor biosynthesis; NAD(+) biosynthesis; nicotinate D-ribonucleotide from nicotinate: step 1/1. Its function is as follows. Catalyzes the first step in the biosynthesis of NAD from nicotinic acid, the ATP-dependent synthesis of beta-nicotinate D-ribonucleotide from nicotinate and 5-phospho-D-ribose 1-phosphate. Helps prevent cellular oxidative stress via its role in NAD biosynthesis. The chain is Probable nicotinate phosphoribosyltransferase from Schizosaccharomyces pombe (strain 972 / ATCC 24843) (Fission yeast).